The sequence spans 406 residues: Cysteine desulfurase (406 aa).

Lys-226 is subject to N6-(pyridoxal phosphate)lysine. Residue Cys-364 is the Cysteine persulfide intermediate of the active site.

This sequence belongs to the class-V pyridoxal-phosphate-dependent aminotransferase family. Csd subfamily. As to quaternary structure, homodimer. Interacts with SufE and the SufBCD complex composed of SufB, SufC and SufD. The interaction with SufE is required to mediate the direct transfer of the sulfur atom from the S-sulfanylcysteine. Pyridoxal 5'-phosphate serves as cofactor.

The protein resides in the cytoplasm. The enzyme catalyses (sulfur carrier)-H + L-cysteine = (sulfur carrier)-SH + L-alanine. The catalysed reaction is L-selenocysteine + AH2 = hydrogenselenide + L-alanine + A + H(+). It functions in the pathway cofactor biosynthesis; iron-sulfur cluster biosynthesis. Its function is as follows. Cysteine desulfurases mobilize the sulfur from L-cysteine to yield L-alanine, an essential step in sulfur metabolism for biosynthesis of a variety of sulfur-containing biomolecules. Component of the suf operon, which is activated and required under specific conditions such as oxidative stress and iron limitation. Acts as a potent selenocysteine lyase in vitro, that mobilizes selenium from L-selenocysteine. Selenocysteine lyase activity is however unsure in vivo. This chain is Cysteine desulfurase, found in Escherichia coli O127:H6 (strain E2348/69 / EPEC).